We begin with the raw amino-acid sequence, 65 residues long: Large ribosomal subunit protein uL29 (65 aa).

It belongs to the universal ribosomal protein uL29 family.

This is Large ribosomal subunit protein uL29 from Buchnera aphidicola subsp. Schizaphis graminum (strain Sg).